The primary structure comprises 90 residues: U7-theraphotoxin-Hhn1f (90 aa).

The first 19 residues, M1–S19, serve as a signal peptide directing secretion. A propeptide spanning residues F20–G50 is cleaved from the precursor. 3 disulfides stabilise this stretch: C51-C65, C58-C70, and C64-C81.

This sequence belongs to the neurotoxin 10 (Hwtx-1) family. 13 (Hntx-13) subfamily. In terms of tissue distribution, expressed by the venom gland.

It localises to the secreted. Ion channel inhibitor. This Cyriopagopus hainanus (Chinese bird spider) protein is U7-theraphotoxin-Hhn1f.